A 444-amino-acid chain; its full sequence is MKKVYIKTFGCQMNEYDSDKMADVLGSAEGMVKTDNPEEADVILFNTCSVREKAQEKVFSDLGRIRPLKEANPDLIIGVGGCVASQEGDAIVKRAPFVDVVFGPQTLHRLPDLIESRKQSGRSQVDISFPEIEKFDHIPPAKVDGGAAFVSIMEGCSKYCSFCVVPYTRGEEVSRPFEDVLTEIAGLAAQGVKEITLLGQNVNAYRGLMSDGEIADFALLLEYVHEVPGVERIRFTTSHPREFSQRIIDCYAKLPKLVSHLHLPVQSGSDRVLMAMKRGYTGLEYKSIIRKLRAIRPDLCLSSDFIIGFPGETEADFEQTLKLVRDCEFDFSFVFIYSPRPGTPAANLPDDTPHAEKVRRLEALNEVIEAKGYAINQSMVGTVQRVLVENVSKKDATMLAARTANNRVVNFAGHPRLLGRMIEVKITAAFPHSLAGEALTSESA.

The region spanning 2–119 (KKVYIKTFGC…LPDLIESRKQ (118 aa)) is the MTTase N-terminal domain. [4Fe-4S] cluster is bound by residues cysteine 11, cysteine 48, cysteine 82, cysteine 156, cysteine 160, and cysteine 163. Positions 142–374 (KVDGGAAFVS…NEVIEAKGYA (233 aa)) constitute a Radical SAM core domain. The 64-residue stretch at 377-440 (QSMVGTVQRV…PHSLAGEALT (64 aa)) folds into the TRAM domain.

This sequence belongs to the methylthiotransferase family. MiaB subfamily. Monomer. [4Fe-4S] cluster is required as a cofactor.

The protein localises to the cytoplasm. The catalysed reaction is N(6)-dimethylallyladenosine(37) in tRNA + (sulfur carrier)-SH + AH2 + 2 S-adenosyl-L-methionine = 2-methylsulfanyl-N(6)-dimethylallyladenosine(37) in tRNA + (sulfur carrier)-H + 5'-deoxyadenosine + L-methionine + A + S-adenosyl-L-homocysteine + 2 H(+). Catalyzes the methylthiolation of N6-(dimethylallyl)adenosine (i(6)A), leading to the formation of 2-methylthio-N6-(dimethylallyl)adenosine (ms(2)i(6)A) at position 37 in tRNAs that read codons beginning with uridine. The protein is tRNA-2-methylthio-N(6)-dimethylallyladenosine synthase of Chromobacterium violaceum (strain ATCC 12472 / DSM 30191 / JCM 1249 / CCUG 213 / NBRC 12614 / NCIMB 9131 / NCTC 9757 / MK).